A 440-amino-acid polypeptide reads, in one-letter code: APO protein 2, chloroplastic (440 aa).

The transit peptide at 1–62 directs the protein to the chloroplast; that stretch reads MSITYSAISF…SLQLNSRVVL (62 aa). A compositionally biased stretch (basic and acidic residues) spans 106 to 115; sequence ARERVKNNKD. The tract at residues 106 to 126 is disordered; it reads ARERVKNNKDKPKRPLPPPKN. APO domains follow at residues 162 to 247 and 332 to 417; these read ACGW…EIPE and VCGY…VVPE.

This sequence belongs to the APO family.

It localises to the plastid. Its subcellular location is the chloroplast. Functionally, may be involved in the stable assembly of several 4Fe-4S cluster-containing complexes of chloroplasts. The protein is APO protein 2, chloroplastic (APO2) of Arabidopsis thaliana (Mouse-ear cress).